The chain runs to 159 residues: Serine-protein kinase RsbW (159 aa).

Belongs to the anti-sigma-factor family.

The enzyme catalyses L-seryl-[protein] + ATP = O-phospho-L-seryl-[protein] + ADP + H(+). The catalysed reaction is L-threonyl-[protein] + ATP = O-phospho-L-threonyl-[protein] + ADP + H(+). Negative regulator of sigma-B activity. Phosphorylates and inactivates its specific antagonist protein, RsbV. Upon phosphorylation of RsbV, RsbW is released and binds to sigma-B, thereby blocking its ability to form an RNA polymerase holoenzyme (E-sigma-B). This is Serine-protein kinase RsbW from Staphylococcus aureus (strain MSSA476).